We begin with the raw amino-acid sequence, 88 residues long: Putative septation protein SpoVG (88 aa).

Belongs to the SpoVG family.

Its function is as follows. Could be involved in septation. The polypeptide is Putative septation protein SpoVG (Lachnospira eligens (strain ATCC 27750 / DSM 3376 / VPI C15-48 / C15-B4) (Eubacterium eligens)).